A 756-amino-acid chain; its full sequence is Serine/threonine-protein kinase tousled-like 1-B (756 aa).

Composition is skewed to low complexity over residues 1 to 12 (MSVQSNSNSSGS) and 23 to 34 (STGSPTPGSVSP). Disordered stretches follow at residues 1–56 (MSVQ…LDPR) and 69–185 (VSGN…QNSS). Over residues 45–56 (EGMDELHSLDPR) the composition is skewed to basic and acidic residues. A compositionally biased stretch (gly residues) spans 72–85 (NTGGSTGSASGGPK). Positions 93-103 (SSHSFGSLGSS) are enriched in low complexity. Positions 104-120 (SDKESETPEKKHFESSR) are enriched in basic and acidic residues. Residues 243–268 (DLRRQIDEQQKLLERFKERLNKCTTM) are a coiled coil. Positions 339-375 (KLLAKRKPSSTPSSQSPTPNESKQRKTKAVNGADNDP) are disordered. Low complexity predominate over residues 347-357 (SSTPSSQSPTP). Residues 397–435 (FKLRLGHLKKEEAEIQAELERLERVRNLHIRELKRINNE) adopt a coiled-coil conformation. The Protein kinase domain occupies 450–728 (YLLLHLLGRG…VHQLGSDSYL (279 aa)). ATP-binding positions include 456–464 (LGRGGFSEV) and lysine 479. Aspartate 580 serves as the catalytic Proton acceptor. The tract at residues 734-756 (RSNSSGNLQATPASPAPSGIISY) is disordered. The segment covering 735–745 (SNSSGNLQATP) has biased composition (polar residues).

It belongs to the protein kinase superfamily. Ser/Thr protein kinase family. Mg(2+) serves as cofactor.

Its subcellular location is the nucleus. The catalysed reaction is L-seryl-[protein] + ATP = O-phospho-L-seryl-[protein] + ADP + H(+). It carries out the reaction L-threonyl-[protein] + ATP = O-phospho-L-threonyl-[protein] + ADP + H(+). This chain is Serine/threonine-protein kinase tousled-like 1-B (tlk1b), found in Danio rerio (Zebrafish).